The sequence spans 67 residues: DNA gyrase inhibitor YacG (67 aa).

Zn(2+)-binding residues include Cys-9, Cys-12, Cys-28, and Cys-32. The segment at 46-67 (RIPSSGDLNDSDDWSEQPLDRQ) is disordered.

The protein belongs to the DNA gyrase inhibitor YacG family. Interacts with GyrB. It depends on Zn(2+) as a cofactor.

Its function is as follows. Inhibits all the catalytic activities of DNA gyrase by preventing its interaction with DNA. Acts by binding directly to the C-terminal domain of GyrB, which probably disrupts DNA binding by the gyrase. The polypeptide is DNA gyrase inhibitor YacG (Erwinia tasmaniensis (strain DSM 17950 / CFBP 7177 / CIP 109463 / NCPPB 4357 / Et1/99)).